Here is a 186-residue protein sequence, read N- to C-terminus: UPF0301 protein Nmul_A2478 (186 aa).

It belongs to the UPF0301 (AlgH) family.

The sequence is that of UPF0301 protein Nmul_A2478 from Nitrosospira multiformis (strain ATCC 25196 / NCIMB 11849 / C 71).